A 267-amino-acid polypeptide reads, in one-letter code: Phosphatidylserine decarboxylase proenzyme (267 aa).

Catalysis depends on charge relay system; for autoendoproteolytic cleavage activity residues D78, H132, and S236. Catalysis depends on S236, which acts as the Schiff-base intermediate with substrate; via pyruvic acid; for decarboxylase activity. S236 is subject to Pyruvic acid (Ser); by autocatalysis.

It belongs to the phosphatidylserine decarboxylase family. PSD-B subfamily. Prokaryotic type I sub-subfamily. Heterodimer of a large membrane-associated beta subunit and a small pyruvoyl-containing alpha subunit. It depends on pyruvate as a cofactor. Post-translationally, is synthesized initially as an inactive proenzyme. Formation of the active enzyme involves a self-maturation process in which the active site pyruvoyl group is generated from an internal serine residue via an autocatalytic post-translational modification. Two non-identical subunits are generated from the proenzyme in this reaction, and the pyruvate is formed at the N-terminus of the alpha chain, which is derived from the carboxyl end of the proenzyme. The autoendoproteolytic cleavage occurs by a canonical serine protease mechanism, in which the side chain hydroxyl group of the serine supplies its oxygen atom to form the C-terminus of the beta chain, while the remainder of the serine residue undergoes an oxidative deamination to produce ammonia and the pyruvoyl prosthetic group on the alpha chain. During this reaction, the Ser that is part of the protease active site of the proenzyme becomes the pyruvoyl prosthetic group, which constitutes an essential element of the active site of the mature decarboxylase.

Its subcellular location is the cell membrane. The catalysed reaction is a 1,2-diacyl-sn-glycero-3-phospho-L-serine + H(+) = a 1,2-diacyl-sn-glycero-3-phosphoethanolamine + CO2. The protein operates within phospholipid metabolism; phosphatidylethanolamine biosynthesis; phosphatidylethanolamine from CDP-diacylglycerol: step 2/2. Its function is as follows. Catalyzes the formation of phosphatidylethanolamine (PtdEtn) from phosphatidylserine (PtdSer). The sequence is that of Phosphatidylserine decarboxylase proenzyme from Helicobacter pylori (strain ATCC 700392 / 26695) (Campylobacter pylori).